The following is a 223-amino-acid chain: Virulence transcriptional regulatory protein PhoP (223 aa).

The Response regulatory domain occupies 2–116; that stretch reads RVLVVEDNAL…EVMARMQALM (115 aa). D51 carries the post-translational modification 4-aspartylphosphate. A DNA-binding region (ompR/PhoB-type) is located at residues 124-222; it reads SQVISLPPFQ…VRGQGYLFEL (99 aa).

Post-translationally, phosphorylated by PhoQ.

Its subcellular location is the cytoplasm. In terms of biological role, member of the two-component regulatory system PhoQ/PhoP involved in virulence and adaptation to low Mg(2+) environments. Necessary for resistance to killing by polymorphonuclear leukocytes (PMNs) and cationic antimicrobial peptides (CAMP) they produce. The protein is Virulence transcriptional regulatory protein PhoP (phoP) of Shigella flexneri.